The sequence spans 592 residues: Inactive metallocarboxypeptidase ECM14 (592 aa).

An N-terminal signal peptide occupies residues 1-21; it reads MRQFTHGTLLAILALANTISA. The propeptide occupies 22–174; that stretch reads IPSFSANNYP…QTVYESYPSS (153 aa). The span at 170-179 shows a compositional bias: polar residues; that stretch reads SYPSSSQRPT. Residues 170-191 form a disordered region; sequence SYPSSSQRPTDNGRGFLPSRES. Residues 202–521 enclose the Peptidase M14 domain; that stretch reads DYQPLSVIGP…NAVMVLGKFL (320 aa). His-264 and Glu-267 together coordinate Zn(2+). Substrate contacts are provided by residues 264 to 267, Arg-322, and 339 to 340; these read HARE and DR. Residues Cys-333 and Cys-356 are joined by a disulfide bond. A glycan (N-linked (GlcNAc...) asparagine) is linked at Asn-349. A Zn(2+)-binding site is contributed by His-396. 397 to 398 serves as a coordination point for substrate; sequence SY. The interval 542–592 is disordered; the sequence is ADKPILDDGDDDEEEDGQDKNDDSWIPDEYKNDNDHDDDDDGWGLRRRRKR. Positions 548–558 are enriched in acidic residues; it reads DDGDDDEEEDG. Residues 559 to 575 are compositionally biased toward basic and acidic residues; the sequence is QDKNDDSWIPDEYKNDN.

Belongs to the peptidase M14 family. Requires Zn(2+) as cofactor.

The protein resides in the vacuole. It localises to the secreted. In terms of biological role, inactive carboxypeptidase that may play a role in cell wall organization and biogenesis. In Blastomyces gilchristii (strain SLH14081) (Blastomyces dermatitidis), this protein is Inactive metallocarboxypeptidase ECM14 (ECM14).